Reading from the N-terminus, the 527-residue chain is Tubulin-specific chaperone E (527 aa).

Ser-2 carries the N-acetylserine modification. The region spanning 27–71 (GVVPPVAGPWLGVEWDNPERGKHDGSHEGTVYFQCRHPTGGSFIR) is the CAP-Gly domain. 7 LRR repeats span residues 154 to 175 (NIRK…IHIA), 180 to 200 (HLEV…SVLT), 205 to 226 (ALKV…RCAM), 230 to 252 (GLEE…DVLQ), 253 to 274 (TVKL…YLIA), 278 to 299 (RLEQ…DAGI), and 308 to 329 (SLKY…NELD). The LRRCT domain maps to 342–384 (NPLTKEDKEAETARLLIIASIGQLKTLNKCEILPEERRRAELD). At Lys-463 the chain carries N6-acetyllysine. Ser-495 carries the post-translational modification Phosphoserine.

This sequence belongs to the TBCE family. Supercomplex made of cofactors A to E. Cofactors A and D function by capturing and stabilizing tubulin in a quasi-native conformation. Cofactor E binds to the cofactor D-tubulin complex; interaction with cofactor C then causes the release of tubulin polypeptides that are committed to the native state. Cofactors B and E can form a heterodimer which binds to alpha-tubulin and enhances their ability to dissociate tubulin heterodimers. Interacts with TBCD.

The protein localises to the cytoplasm. It localises to the cytoskeleton. Its function is as follows. Tubulin-folding protein; involved in the second step of the tubulin folding pathway and in the regulation of tubulin heterodimer dissociation. Required for correct organization of microtubule cytoskeleton and mitotic splindle, and maintenance of the neuronal microtubule network. The chain is Tubulin-specific chaperone E (TBCE) from Pongo abelii (Sumatran orangutan).